Here is a 371-residue protein sequence, read N- to C-terminus: 4-hydroxy-3-methylbut-2-en-1-yl diphosphate synthase (flavodoxin) (371 aa).

[4Fe-4S] cluster contacts are provided by C270, C273, C305, and E312.

It belongs to the IspG family. It depends on [4Fe-4S] cluster as a cofactor.

The catalysed reaction is (2E)-4-hydroxy-3-methylbut-2-enyl diphosphate + oxidized [flavodoxin] + H2O + 2 H(+) = 2-C-methyl-D-erythritol 2,4-cyclic diphosphate + reduced [flavodoxin]. It functions in the pathway isoprenoid biosynthesis; isopentenyl diphosphate biosynthesis via DXP pathway; isopentenyl diphosphate from 1-deoxy-D-xylulose 5-phosphate: step 5/6. Its function is as follows. Converts 2C-methyl-D-erythritol 2,4-cyclodiphosphate (ME-2,4cPP) into 1-hydroxy-2-methyl-2-(E)-butenyl 4-diphosphate. This Shewanella loihica (strain ATCC BAA-1088 / PV-4) protein is 4-hydroxy-3-methylbut-2-en-1-yl diphosphate synthase (flavodoxin).